Consider the following 134-residue polypeptide: Ribonuclease VapC1 (134 aa).

Residues 3-132 enclose the PINc domain; the sequence is YMLDTNIIIY…RITDLQWQDW (130 aa). 2 residues coordinate Mg(2+): Asp6 and Asp99.

This sequence belongs to the PINc/VapC protein family. Forms a complex with VapB1. Requires Mg(2+) as cofactor.

In terms of biological role, toxic component of a type II toxin-antitoxin (TA) system. Upon expression in E.coli inhibits growth in liquid culture. Its toxic effect is neutralized by coexpression with antitoxin VapB1. Degrades RNA but not ss- or ds-DNA in vitro, degradation is inhibited by VapB1 antitoxin. The protein is Ribonuclease VapC1 of Haemophilus influenzae (strain R2866).